We begin with the raw amino-acid sequence, 258 residues long: Phosphate import ATP-binding protein PstB 2 (258 aa).

The region spanning 12-253 is the ABC transporter domain; that stretch reads IQVRDLNFYY…PRQKQTEDYI (242 aa). Position 44 to 51 (44 to 51) interacts with ATP; it reads GPSGCGKS.

Belongs to the ABC transporter superfamily. Phosphate importer (TC 3.A.1.7) family. As to quaternary structure, the complex is composed of two ATP-binding proteins (PstB), two transmembrane proteins (PstC and PstA) and a solute-binding protein (PstS).

It is found in the cell inner membrane. The enzyme catalyses phosphate(out) + ATP + H2O = ADP + 2 phosphate(in) + H(+). Its function is as follows. Part of the ABC transporter complex PstSACB involved in phosphate import. Responsible for energy coupling to the transport system. This chain is Phosphate import ATP-binding protein PstB 2, found in Pectobacterium atrosepticum (strain SCRI 1043 / ATCC BAA-672) (Erwinia carotovora subsp. atroseptica).